A 554-amino-acid chain; its full sequence is Intraflagellar transport protein 56 (554 aa).

Positions 1–27 (MMLSRAKPAVGGESPHTDKRKKKGRKI) are disordered. Residues 18–27 (DKRKKKGRKI) are compositionally biased toward basic residues. 4 TPR repeats span residues 57-90 (EDTN…ENCN), 92-125 (EVWV…LQNR), 151-184 (KEDQ…NREY), and 468-501 (ANDC…EGKR).

This sequence belongs to the IFT56 family. As to quaternary structure, component of the IFT complex B. Interacts with IFT46; the interaction is direct.

The protein localises to the cell projection. The protein resides in the cilium. Functionally, component of the intraflagellar transport (IFT) complex B required for transport of proteins in the motile cilium. Required for transport of specific ciliary cargo proteins related to motility, while it is neither required for IFT complex B assembly or motion nor for cilium assembly. Required for efficient coupling between the accumulation of GLI2 and GLI3 at the ciliary tips and their dissociation from the negative regulator SUFU. Plays a key role in maintaining the integrity of the IFT complex B and the proper ciliary localization of the IFT complex B components. Not required for IFT complex A ciliary localization or function. Essential for maintaining proper microtubule organization within the ciliary axoneme. This Rattus norvegicus (Rat) protein is Intraflagellar transport protein 56.